We begin with the raw amino-acid sequence, 157 residues long: Transcription elongation factor GreA (157 aa).

Positions 1–24 are disordered; sequence MDKFPMTPEGYHALDEELKRRQQE. Over residues 12-24 the composition is skewed to basic and acidic residues; it reads HALDEELKRRQQE. Residues 53 to 73 adopt a coiled-coil conformation; it reads EAQSLNEGRIAELEDKLSRAE.

Belongs to the GreA/GreB family.

Necessary for efficient RNA polymerase transcription elongation past template-encoded arresting sites. The arresting sites in DNA have the property of trapping a certain fraction of elongating RNA polymerases that pass through, resulting in locked ternary complexes. Cleavage of the nascent transcript by cleavage factors such as GreA or GreB allows the resumption of elongation from the new 3'terminus. GreA releases sequences of 2 to 3 nucleotides. The sequence is that of Transcription elongation factor GreA from Beijerinckia indica subsp. indica (strain ATCC 9039 / DSM 1715 / NCIMB 8712).